The chain runs to 376 residues: Putative type I restriction enzyme MpnIIP endonuclease subunit N-terminal part (376 aa).

Functionally, the N-terminal section of a putative type I restriction enzyme that if reconstituted might recognize 5'-GAN(7)TAY-3' and cleave a random distance away. Subunit R is required for both nuclease and ATPase activities, but not for modification. The chain is Putative type I restriction enzyme MpnIIP endonuclease subunit N-terminal part from Mycoplasma pneumoniae (strain ATCC 29342 / M129 / Subtype 1) (Mycoplasmoides pneumoniae).